Here is a 640-residue protein sequence, read N- to C-terminus: MRRLRSLYLQSSICFRRFNHYSAKDTEALQRRLEQIPIENYRNFSIVAHVDHGKSTLSDRLLEFTGVIKAGDSNRQVLDKLEVERERGITIKAQTCTMFYYDKRRNKDYLLHLVDTPGHVDFRAEVSRSYASCGGALLLVDASQGVQAQTVANFYLAYSMNLKLIPVINKIDLDSANIPQAEAQIESTFELPRAEIIRVSAKTGINVKEDLLPAIIDRIPPPTGVGKKPFRALLVDSWYDSYLGVVLLVNIVDGVVKKGDRVVSAQTGKKYEIKELGIMYPDKVSMGCLRTGQVGYIVPGMKESKDAKIGDTIMHVGKESVTEVLDGFEDPKPMVFVGAFPADGTEFKSLDEDITRLVLNDRSVSLQRESSNALGQGWRLGFLGSLHASVFKDRLEKEYGSKLIITQPTVPYVIKFTNGEEKIITNPDDFPDLSLRKTRIDSLQEPYVEAIITLPQEYLGAVIKLCENNRGIQKEITYLNVTGQVLLKYEMPLAHLVDDFFGKLKSVSRGYGSLDYEDIGYKASDIVKLELVLNGKSVDALAQVMHRSQVERVGRKWAKKFKEYVKSQLYEVVIQARANNKVIARETIKARRKDVLAKLHASDVSRRKKLLVKQKEGKKQMKSVGNIQINQEAYQAFLRR.

A mitochondrion-targeting transit peptide spans 1-26 (MRRLRSLYLQSSICFRRFNHYSAKDT). One can recognise a tr-type G domain in the interval 39 to 223 (ENYRNFSIVA…AIIDRIPPPT (185 aa)). Residues 48–55 (AHVDHGKS), 115–119 (DTPGH), and 169–172 (NKID) contribute to the GTP site.

It belongs to the TRAFAC class translation factor GTPase superfamily. Classic translation factor GTPase family. LepA subfamily.

It is found in the mitochondrion inner membrane. The catalysed reaction is GTP + H2O = GDP + phosphate + H(+). Functionally, promotes mitochondrial protein synthesis. May act as a fidelity factor of the translation reaction, by catalyzing a one-codon backward translocation of tRNAs on improperly translocated ribosomes. Binds to mitochondrial ribosomes in a GTP-dependent manner. The polypeptide is Translation factor GUF1, mitochondrial (Lachancea thermotolerans (strain ATCC 56472 / CBS 6340 / NRRL Y-8284) (Yeast)).